We begin with the raw amino-acid sequence, 104 residues long: Large ribosomal subunit protein uL24 (104 aa).

It belongs to the universal ribosomal protein uL24 family. Part of the 50S ribosomal subunit.

One of two assembly initiator proteins, it binds directly to the 5'-end of the 23S rRNA, where it nucleates assembly of the 50S subunit. Functionally, one of the proteins that surrounds the polypeptide exit tunnel on the outside of the subunit. This is Large ribosomal subunit protein uL24 from Corynebacterium kroppenstedtii (strain DSM 44385 / JCM 11950 / CIP 105744 / CCUG 35717).